A 131-amino-acid polypeptide reads, in one-letter code: uncharacterized protein (131 aa).

The disordered stretch occupies residues 13–32 (TYSPLPEPPPTPALGGQRGP).

This is an uncharacterized protein from Homo sapiens (Human).